Reading from the N-terminus, the 194-residue chain is Lysozyme g (194 aa).

Catalysis depends on residues Glu71 and Asp84.

This sequence belongs to the glycosyl hydrolase 23 family. In terms of tissue distribution, expressed in intestine, liver, spleen, anterior kidney, posterior kidney, heart, gill, muscle and leukocytes.

The enzyme catalyses Hydrolysis of (1-&gt;4)-beta-linkages between N-acetylmuramic acid and N-acetyl-D-glucosamine residues in a peptidoglycan and between N-acetyl-D-glucosamine residues in chitodextrins.. Its function is as follows. Has lytic activity against M.lysodeikticus, V.alginolyticus from Epinephelus fario, V.vulnificus from culture water, A.hydrophila from soft-shell turtle, A.hydrophila from goldfish and V.parahaemolyticus, P.fluorescens and V.fluvialis from culture water. In Epinephelus coioides (Orange-spotted grouper), this protein is Lysozyme g.